The primary structure comprises 359 residues: Peptide chain release factor 1 (359 aa).

The residue at position 236 (Gln-236) is an N5-methylglutamine.

Belongs to the prokaryotic/mitochondrial release factor family. In terms of processing, methylated by PrmC. Methylation increases the termination efficiency of RF1.

It is found in the cytoplasm. Its function is as follows. Peptide chain release factor 1 directs the termination of translation in response to the peptide chain termination codons UAG and UAA. The sequence is that of Peptide chain release factor 1 from Streptococcus agalactiae serotype Ia (strain ATCC 27591 / A909 / CDC SS700).